Reading from the N-terminus, the 109-residue chain is Cell division protein ZapA (109 aa).

A coiled-coil region spans residues 21 to 99; it reads PEQRDALNQA…IEQALLEQGR (79 aa).

The protein belongs to the ZapA family. Type 1 subfamily. In terms of assembly, homodimer. Interacts with FtsZ.

It is found in the cytoplasm. Activator of cell division through the inhibition of FtsZ GTPase activity, therefore promoting FtsZ assembly into bundles of protofilaments necessary for the formation of the division Z ring. It is recruited early at mid-cell but it is not essential for cell division. This chain is Cell division protein ZapA, found in Klebsiella pneumoniae (strain 342).